We begin with the raw amino-acid sequence, 209 residues long: Glycolipid transfer protein A (209 aa).

2 consecutive repeat copies span residues 45 to 55 and 56 to 66. Residues 45–66 form a 2 X 12 AA approximate tandem repeats region; sequence IKADITGNITKIRSVYESNPTK. 48–55 provides a ligand contact to beta-D-galactosyl-(1-&gt;4)-beta-D-glucosyl-(1&lt;-&gt;1)-N-[(9Z)-octadecenoyl]-sphing-4-enine; it reads DITGNITK. Residues H140 and Y207 each coordinate beta-D-galactosyl-(1-&gt;4)-beta-D-glucosyl-(1&lt;-&gt;1)-N-[(9Z)-octadecenoyl]-sphing-4-enine.

The protein belongs to the GLTP family.

The protein localises to the cytoplasm. Functionally, accelerates the intermembrane transfer of various glycolipids. Catalyzes the transfer of various glycosphingolipids between membranes but does not catalyze the transfer of phospholipids. May be involved in the intracellular translocation of glucosylceramides. This chain is Glycolipid transfer protein A (gltp-a), found in Xenopus laevis (African clawed frog).